We begin with the raw amino-acid sequence, 674 residues long: Xaa-Pro aminopeptidase 2 (674 aa).

An N-terminal signal peptide occupies residues 1-21; it reads MARAHWGCCPWLVLLCACAWG. 3 N-linked (GlcNAc...) asparagine glycosylation sites follow: asparagine 35, asparagine 49, and asparagine 65. Arginine 116 is a substrate binding site. Residues asparagine 278 and asparagine 291 are each glycosylated (N-linked (GlcNAc...) asparagine). Substrate is bound at residue histidine 430. Residues aspartate 450, aspartate 461, and histidine 524 each contribute to the Zn(2+) site. Positions 524, 533, and 555 each coordinate substrate. Zn(2+)-binding residues include glutamate 555 and glutamate 569. The GPI-anchor amidated alanine moiety is linked to residue alanine 649. Positions 650-674 are cleaved as a propeptide — removed in mature form; that stretch reads ARAPDTASWASVLVVSTLAILGWSV.

This sequence belongs to the peptidase M24B family. Homotrimer. Zn(2+) is required as a cofactor. In terms of processing, N-glycosylated. Expressed in kidney, lung, heart, placenta, liver, small intestine and colon. No expression in brain, skeletal muscle, pancreas, spleen, thymus, prostate, testis and ovary.

The protein localises to the cell membrane. It carries out the reaction Release of any N-terminal amino acid, including proline, that is linked to proline, even from a dipeptide or tripeptide.. With respect to regulation, inhibited by apstatin and the chelating agent 1,10-phenanthroline. Also inhibited by high concentrations of Zn(2+). Not significantly inhibited by bestatin or phosphoramidon. In terms of biological role, membrane-bound metalloprotease which catalyzes the removal of a penultimate prolyl residue from the N-termini of peptides, such as Arg-Pro-Pro. May play a role in the metabolism of the vasodilator bradykinin. This chain is Xaa-Pro aminopeptidase 2 (XPNPEP2), found in Homo sapiens (Human).